The following is a 284-amino-acid chain: Nucleotide-binding protein SPO0713 (284 aa).

ATP is bound at residue 3–10; the sequence is GPSGAGRS. 50-53 contacts GTP; the sequence is DARN.

The protein belongs to the RapZ-like family.

Its function is as follows. Displays ATPase and GTPase activities. The protein is Nucleotide-binding protein SPO0713 of Ruegeria pomeroyi (strain ATCC 700808 / DSM 15171 / DSS-3) (Silicibacter pomeroyi).